The primary structure comprises 750 residues: Nibrin (750 aa).

The region spanning 24 to 83 (YIVGRKNCAILIENDQSISRNHAVLRVNFPVTSLSQTDEIPTLTIKDNSKYGTFINEEKM) is the FHA domain. BRCT domains lie at 105-181 (KFRV…SEFL) and 224-315 (GKTF…LAVI). The mediates interaction with SP100 stretch occupies residues 111 to 328 (EPLVVCSSCL…TESYCNPQGQ (218 aa)). The interaction with MTOR, MAPKAP1 and RICTOR stretch occupies residues 221 to 403 (IFKGKTFVFL…SRKLLQGTCN (183 aa)). Threonine 337 is modified (phosphothreonine). Position 343 is a phosphoserine; by ATM (serine 343). A phosphoserine mark is found at serine 347 and serine 433. Disordered stretches follow at residues 429–479 (NYQL…SSCK) and 494–550 (QPAG…RKRK). A Glycyl lysine isopeptide (Lys-Gly) (interchain with G-Cter in ubiquitin) cross-link involves residue lysine 436. Residues 446 to 457 (WSSQQQLNSIKN) show a composition bias toward polar residues. A Nuclear localization signal motif is present at residues 461-467 (PCSRKRE). Residues 502–514 (KSKDHESQSETLD) show a composition bias toward basic and acidic residues. Residues serine 508 and serine 517 each carry the phosphoserine modification. Residue lysine 528 forms a Glycyl lysine isopeptide (Lys-Gly) (interchain with G-Cter in SUMO2) linkage. Over residues 540–550 (STEDLRARKRK) the composition is skewed to basic and acidic residues. Glycyl lysine isopeptide (Lys-Gly) (interchain with G-Cter in SUMO2) cross-links involve residues lysine 569 and lysine 580. Over residues 581-599 (QEADVSIRKKPRMDAERNQ) the composition is skewed to basic and acidic residues. The disordered stretch occupies residues 581 to 622 (QEADVSIRKKPRMDAERNQHLNGGPVPESNSALQEDETGKKD). Glycyl lysine isopeptide (Lys-Gly) (interchain with G-Cter in ubiquitin) cross-links involve residues lysine 683, lysine 687, and lysine 732. Positions 737-746 (ADDLFRYNPN) match the FxF/Y motif motif.

It belongs to the Nibrin family. Component of the MRN complex composed of two heterodimers RAD50 and MRE11 associated with a single NBN. The MRN complexes dimerize on DNA to form joined MRN-MRN oligomers required for DNA double-strand break repair. The MRN complexes dimerize on DNA to form joined MRN-MRN oligomers required for DNA double-strand break repair. As part of the MRN complex, interacts with MCM9; the interaction recruits the complex to DNA repair sites. Component of the BASC complex, at least composed of BRCA1, MSH2, MSH6, MLH1, ATM, BLM, RAD50, MRE11 and NBN. Interacts with histone H2AX; this requires phosphorylation of H2AX on 'Ser-139' and promotes NBN recruitment to DNA damage sites. Interacts with (phosphorylated) MDC1; promoting NBN recruitment to DNA damage sites. Interacts with (phosphorylated) RAD17; promoting NBN recruitment to DNA damage sites. Interacts (via FxF/Y motif) with ATM. Interacts with HJURP. Interacts with INTS3. Interacts with KPNA2. Interacts with TERF2; interaction is disrupted upon NBN phosphorylation by CDK2. Interacts with (phosphorylated) RBBP8/CtIP; the interaction links the role of the MRN complex in DNA double-strand break sensing to resection. Interacts with SP100; recruits NBN to PML bodies. Interacts with ATF2. Interacts with MTOR, MAPKAP1 isoform 2 and RICTOR; indicative for an association with the mTORC2 complex. Interacts with MRNIP. Interacts with UFL1; promoting UFL1 recruitment to double-strand breaks following DNA damage. Interacts with CYREN (via XLF motif). Post-translationally, phosphorylated by ATM in response of ionizing radiation, and such phosphorylation is responsible intra-S phase checkpoint control and telomere maintenance. Phosphorylated at Ser-433 by CDK2 in S/G2 phases abolishes interaction with TERF2, enabling DCLRE1B/Apollo recruitment to telomeres. Phosphorylation at Ser-433 in response to dysfunctional telomeres promotes non-homologous end joining repair at telomeres, while dephosphorylation by PPP1CA promotes microhomology-mediated end-joining (MMEJ) repair. Ubiquitinated at Lys-436 via 'Lys-6'-linked ubiquitin chains by RNF8, promoting NBN recruitment to DNA double-strand breaks (DSBs). Ubiquitinated at Lys-687 via 'Lys-63'-linked ubiquitin chains by PELI1: ubiquitination takes place following PELI1 phosphorylation and promotes ATM activation and DNA repair. Ubiquitinated at Lys-732 via 'Lys-63'-linked ubiquitin chains by the SCF(SKP2) complex: ubiquitination takes place following SKP2 phosphorylation and promotes ATM activation and DNA repair. In terms of tissue distribution, present at approximately equal levels in the heart at fetal day 17, at relatively constant levels at postnatal days 10, 17 and 21 and at slightly lower levels in the adult heart. Barely detectable in the brain. Not detected in kidney, very low levels in liver and skeletal muscle and moderate levels in heart, lung and brain (at protein level).

Its subcellular location is the nucleus. The protein resides in the chromosome. It localises to the PML body. The protein localises to the telomere. Functionally, component of the MRN complex, which plays a central role in double-strand break (DSB) repair, DNA recombination, maintenance of telomere integrity and meiosis. The MRN complex is involved in the repair of DNA double-strand breaks (DSBs) via homologous recombination (HR), an error-free mechanism which primarily occurs during S and G2 phases. The complex (1) mediates the end resection of damaged DNA, which generates proper single-stranded DNA, a key initial steps in HR, and is (2) required for the recruitment of other repair factors and efficient activation of ATM and ATR upon DNA damage. The MRN complex possesses single-strand endonuclease activity and double-strand-specific 3'-5' exonuclease activity, which are provided by MRE11, to initiate end resection, which is required for single-strand invasion and recombination. Within the MRN complex, NBN acts as a protein-protein adapter, which specifically recognizes and binds phosphorylated proteins, promoting their recruitment to DNA damage sites. Recruits MRE11 and RAD50 components of the MRN complex to DSBs in response to DNA damage. Promotes the recruitment of PI3/PI4-kinase family members ATM, ATR, and probably DNA-PKcs to the DNA damage sites, activating their functions. Mediates the recruitment of phosphorylated RBBP8/CtIP to DSBs, leading to cooperation between the MRN complex and RBBP8/CtIP to initiate end resection. RBBP8/CtIP specifically promotes the endonuclease activity of the MRN complex to clear DNA ends containing protein adducts. The MRN complex is also required for the processing of R-loops. NBN also functions in telomere length maintenance via its interaction with TERF2: interaction with TERF2 during G1 phase preventing recruitment of DCLRE1B/Apollo to telomeres. NBN also promotes DNA repair choice at dysfunctional telomeres: NBN phosphorylation by CK2 promotes non-homologous end joining repair at telomeres, while unphosphorylated NBN promotes microhomology-mediated end-joining (MMEJ) repair. Enhances AKT1 phosphorylation possibly by association with the mTORC2 complex. The protein is Nibrin (Nbn) of Rattus norvegicus (Rat).